The following is a 149-amino-acid chain: MHCPFCTAKDTKVIDSRLVGGGHQVRRRRECNDCHERFTTFEGAELVMPRVIKQDGSREPFNEDKLLNGLNRALEKRPVSTEQVEEVVNIIKSQLRATGEREVSSHLVGECIMEALKKLDKVAYVRFASVYRSFEDIREFGEEIARLGE.

Residues C3–C34 fold into a zinc finger. The ATP-cone domain occupies P49–E139.

It belongs to the NrdR family. The cofactor is Zn(2+).

Functionally, negatively regulates transcription of bacterial ribonucleotide reductase nrd genes and operons by binding to NrdR-boxes. This chain is Transcriptional repressor NrdR, found in Pseudoalteromonas translucida (strain TAC 125).